We begin with the raw amino-acid sequence, 552 residues long: Glycosyltransferase family 92 protein RCOM_0530710 (552 aa).

The chain crosses the membrane as a helical; Signal-anchor span at residues 12–34 (WNRFFWCTLLLVLSCVLFTASTF). The GT92 domain occupies 277–520 (KPHEMCICTM…GTRAVEPPDW (244 aa)).

Belongs to the glycosyltransferase 92 family.

Its subcellular location is the membrane. This is Glycosyltransferase family 92 protein RCOM_0530710 from Ricinus communis (Castor bean).